The following is a 454-amino-acid chain: DNA-binding protein BIN4 (454 aa).

Disordered regions lie at residues 24-53 (LLSL…DDGD), 103-249 (AGKE…DKDT), and 380-454 (TFES…KAKK). The segment covering 112-123 (DCEKLSSKHKDA) has biased composition (basic and acidic residues). Residues 132-150 (LVSSDSEPSSPIKQEVTVS) show a composition bias toward polar residues. Residues 229-249 (TPKEENCAQEILKTEDKDKDT) show a composition bias toward basic and acidic residues. A compositionally biased stretch (basic residues) spans 438–454 (PAKKARNSAPKKPKAKK).

Interacts with TOP6A, RHL1 and itself, but not with TOP6B. Expressed in expanding cotyledons, vascular cells, elongating root cells, developing leaf trichomes, root and apical meristems and lateral root primordia.

Its subcellular location is the nucleus. Component of the DNA topoisomerase VI complex. Binds to DNA. Required for chromatin organization and progression of endoreduplication cycles. The loss of BIN4 activates the ATM- and ATR-dependent DNA damage responses in postmitotic cells and induces the ectopic expression of the mitotic G2/M-specific cyclin B1;1 gene in non-dividing cells. This Arabidopsis thaliana (Mouse-ear cress) protein is DNA-binding protein BIN4 (BIN4).